We begin with the raw amino-acid sequence, 494 residues long: Xylan glycosyltransferase MUCI21 (494 aa).

Residues 1–40 (MRQNLKKVAQIKVDESKKLFPYVFRVKTSCGNCAKRSKPK) are Cytoplasmic-facing. A helical; Signal-anchor for type II membrane protein membrane pass occupies residues 41 to 61 (LIYLLIFSLISSCFVFAPQLL). Residues 62–494 (CFPYPSALFL…LIDAYAKSIR (433 aa)) are Lumenal-facing. N-linked (GlcNAc...) asparagine glycosylation is present at N375.

Belongs to the glycosyltransferase 61 family.

The protein localises to the golgi apparatus membrane. Its function is as follows. Glycosyletransferase required for the proper composition and structural properties of released seed coat mucilage. Required for the production of highly branched xylan polymers in seed coat mucilage. Facilitates the addition of xylose residues directly to the xylan backbone. Xylan with xylose side chains seems to be necessary for pectin attachment to the seed surface. Essential for xylan synthesis in seed coat epidermal (SCE) cells. The chain is Xylan glycosyltransferase MUCI21 from Arabidopsis thaliana (Mouse-ear cress).